The primary structure comprises 363 residues: G-protein coupled receptor 6 (363 aa).

Residues methionine 1 to proline 75 are Extracellular-facing. N-linked (GlcNAc...) asparagine glycosylation is found at asparagine 2 and asparagine 9. The tract at residues alanine 28–proline 51 is disordered. Asparagine 52 is a glycosylation site (N-linked (GlcNAc...) asparagine). The helical transmembrane segment at tryptophan 76–valine 95 threads the bilayer. Over alanine 96–proline 107 the chain is Cytoplasmic. Residues methionine 108–valine 131 traverse the membrane as a helical segment. Over phenylalanine 132 to leucine 143 the chain is Extracellular. Residues leucine 144 to valine 165 traverse the membrane as a helical segment. Residues aspartate 166–valine 186 lie on the Cytoplasmic side of the membrane. Residues histidine 187–leucine 206 form a helical membrane-spanning segment. At glycine 207–leucine 231 the chain is on the extracellular side. Residues serine 232–cysteine 250 form a helical membrane-spanning segment. At glutamine 251 to glycine 278 the chain is on the cytoplasmic side. Residues valine 279–glutamine 305 traverse the membrane as a helical segment. The Extracellular segment spans residues glutamate 306 to isoleucine 310. The chain crosses the membrane as a helical span at residues tyrosine 311 to phenylalanine 332. At arginine 333–valine 363 the chain is on the cytoplasmic side. Cysteine 346 carries S-palmitoyl cysteine lipidation. 3 positions are modified to phosphoserine: serine 357, serine 359, and serine 361.

The protein belongs to the G-protein coupled receptor 1 family. In terms of tissue distribution, expressed in the brain, with a prominent distribution in striatum.

Its subcellular location is the cell membrane. In terms of biological role, orphan receptor with constitutive G(s) signaling activity that activate cyclic AMP. Promotes neurite outgrowth and blocks myelin inhibition in neurons. The protein is G-protein coupled receptor 6 (Gpr6) of Rattus norvegicus (Rat).